The following is a 338-amino-acid chain: Sorting nexin-15 (338 aa).

Residues 1–131 form the PX domain; sequence MSRRAKKDDF…EFFRGGEVTR (131 aa). The a 1,2-diacyl-sn-glycero-3-phospho-(1D-myo-inositol-3-phosphate) site is built by arginine 52, serine 54, arginine 88, and arginine 97. Omega-N-methylarginine is present on arginine 106. Residues 134–155 form a disordered region; the sequence is EVSRDLQILPPPLIPTPPSDEA. Residues 142–151 show a composition bias toward pro residues; the sequence is LPPPLIPTPP. Residues serine 202 and serine 228 each carry the phosphoserine modification. The disordered stretch occupies residues 240–270; the sequence is VQSKRLDQEPWEPGGREEEEAEDGDPAPAYL. Residues 266–338 enclose the MIT domain; the sequence is APAYLGQATE…RAETLHAHLP (73 aa).

This sequence belongs to the sorting nexin family. As to quaternary structure, homodimer. Interacts with SNX1, SNX2 and SNX4.

It is found in the cytoplasm. Its subcellular location is the membrane. The protein resides in the cytoplasmic vesicle membrane. Its function is as follows. May be involved in several stages of intracellular trafficking. Overexpression of SNX15 disrupts the normal trafficking of proteins from the plasma membrane to recycling endosomes or the TGN. This is Sorting nexin-15 (Snx15) from Rattus norvegicus (Rat).